The primary structure comprises 146 residues: Angiogenin (146 aa).

Positions Met-1–Ala-24 are cleaved as a signal peptide. Residue Gln-25 is modified to Pyrrolidone carboxylic acid. Residue His-37 is the Proton acceptor of the active site. TRNA is bound at residue Arg-45. 3 disulfides stabilise this stretch: Cys-50–Cys-105, Cys-63–Cys-116, and Cys-81–Cys-131. Residues Arg-55–Leu-59 carry the Nucleolar localization signal motif. Residues Cys-105 and Ile-127 each coordinate tRNA. Catalysis depends on His-138, which acts as the Proton donor.

Belongs to the pancreatic ribonuclease family. As to quaternary structure, homodimer. Interacts with RNH1; inhibiting ANG ribonuclease activity. Interacts with PCNA.

It localises to the secreted. The protein resides in the nucleus. The protein localises to the nucleolus. It is found in the cytoplasm. Its subcellular location is the stress granule. Its activity is regulated as follows. Has weak tRNA ribonuclease activity by itself due to partial autoinhibition by its C-terminus, which folds into a short alpha-helix that partially occludes the substrate-binding site. In absence of stress, the ribonuclease activity is inhibited by RNH1 in the cytoplasm. In response to stress, dissociates from RNH1 in the cytoplasm and associates with cytoplasmic ribosomes with vacant A-sites: ribosomes directly activate the tRNA ribonuclease activity of ANG by refolding the C-terminal alpha-helix. In response to stress, the angiogenic activity of ANG is inhibited by RNH1 in the nucleus. In terms of biological role, secreted ribonuclease that can either promote or restrict cell proliferation of target cells, depending on the context. Endocytosed in target cells via its receptor PLXNB2 and translocates to the cytoplasm or nucleus. Under stress conditions, localizes to the cytoplasm and promotes the assembly of stress granules (SGs): specifically cleaves a subset of tRNAs within anticodon loops to produce tRNA-derived stress-induced fragments (tiRNAs), resulting in translation repression and inhibition of cell proliferation. tiRNas also prevent formation of apoptosome, thereby promoting cell survival. Preferentially cleaves RNAs between a pyrimidine and an adenosine residue, suggesting that it cleaves the anticodon loop of tRNA(Ala) (32-UUAGCAU-38) after positions 33 and 36. Cleaves a subset of tRNAs, including tRNA(Ala), tRNA(Glu), tRNA(Gly), tRNA(Lys), tRNA(Val), tRNA(His), tRNA(Asp) and tRNA(Sec). Under growth conditions and in differentiated cells, translocates to the nucleus and stimulates ribosomal RNA (rRNA) transcription, including that containing the initiation site sequences of 45S rRNA, thereby promoting cell growth and proliferation. Angiogenin induces vascularization of normal and malignant tissues via its ability to promote rRNA transcription. Involved in hematopoietic stem and progenitor cell (HSPC) growth and survival by promoting rRNA transcription in growth conditions and inhibiting translation in response to stress, respectively. Mediates the crosstalk between myeloid and intestinal epithelial cells to protect the intestinal epithelial barrier integrity: secreted by myeloid cells and promotes intestinal epithelial cells proliferation and survival. Also mediates osteoclast-endothelial cell crosstalk in growing bone: produced by osteoclasts and protects the neighboring vascular cells against senescence by promoting rRNA transcription. The chain is Angiogenin (ANG) from Chlorocebus aethiops (Green monkey).